The chain runs to 225 residues: Protein YIP4 (225 aa).

Residues serine 27 and serine 28 each carry the phosphoserine modification. 5 consecutive transmembrane segments (helical) span residues tryptophan 91–threonine 111, serine 118–isoleucine 138, leucine 154–isoleucine 176, valine 180–serine 199, and lysine 205–leucine 225.

Belongs to the YIP1 family. As to quaternary structure, interacts with the YIP1 family members yip1 and yip5, and with several Rab GTPases.

The protein resides in the membrane. May be involved in proper membrane localization of Rab GTPases. This is Protein YIP4 from Schizosaccharomyces pombe (strain 972 / ATCC 24843) (Fission yeast).